The following is a 205-amino-acid chain: Ribosomal RNA small subunit methyltransferase G (205 aa).

Residues Gly73, Leu78, Val124–Glu125, and Arg138 each bind S-adenosyl-L-methionine.

This sequence belongs to the methyltransferase superfamily. RNA methyltransferase RsmG family.

Its subcellular location is the cytoplasm. The enzyme catalyses guanosine(527) in 16S rRNA + S-adenosyl-L-methionine = N(7)-methylguanosine(527) in 16S rRNA + S-adenosyl-L-homocysteine. Specifically methylates the N7 position of guanine in position 527 of 16S rRNA. The protein is Ribosomal RNA small subunit methyltransferase G of Actinobacillus pleuropneumoniae serotype 7 (strain AP76).